The following is a 57-amino-acid chain: MAVQKSRKTRSKRGMRRSHDALTAPAQLSVDATSGETHRRHHMTADGFYRGKKVIEL.

Residues 1-16 (MAVQKSRKTRSKRGMR) show a composition bias toward basic residues. Positions 1-45 (MAVQKSRKTRSKRGMRRSHDALTAPAQLSVDATSGETHRRHHMTA) are disordered.

This sequence belongs to the bacterial ribosomal protein bL32 family.

The polypeptide is Large ribosomal subunit protein bL32 (Psychromonas ingrahamii (strain DSM 17664 / CCUG 51855 / 37)).